The following is a 510-amino-acid chain: Bifunctional pantoate ligase/cytidylate kinase (510 aa).

Residues Met1 to Val276 form a pantoate--beta-alanine ligase region. Position 29-36 (Met29–His36) interacts with ATP. The active-site Proton donor is His36. Gln61 serves as a coordination point for (R)-pantoate. Residue Gln61 coordinates beta-alanine. Position 150–153 (Gly150–Asp153) interacts with ATP. Gln156 is a binding site for (R)-pantoate. Leu187–Arg190 serves as a coordination point for ATP. A cytidylate kinase region spans residues Phe277 to Lys510.

This sequence in the N-terminal section; belongs to the pantothenate synthetase family. In the C-terminal section; belongs to the cytidylate kinase family. Type 1 subfamily.

Its subcellular location is the cytoplasm. It catalyses the reaction (R)-pantoate + beta-alanine + ATP = (R)-pantothenate + AMP + diphosphate + H(+). It carries out the reaction CMP + ATP = CDP + ADP. The catalysed reaction is dCMP + ATP = dCDP + ADP. The protein operates within cofactor biosynthesis; (R)-pantothenate biosynthesis; (R)-pantothenate from (R)-pantoate and beta-alanine: step 1/1. Functionally, catalyzes the condensation of pantoate with beta-alanine in an ATP-dependent reaction via a pantoyl-adenylate intermediate. Catalyzes the transfer of a phosphate group from ATP to either CMP or dCMP to form CDP or dCDP and ADP, respectively. This is Bifunctional pantoate ligase/cytidylate kinase from Prochlorococcus marinus (strain MIT 9215).